We begin with the raw amino-acid sequence, 363 residues long: MKIEQIQLVQFRNHKNLSYGPAEGINLLYGPNGSGKTSVLEGIHYCALTKGFVTAYDSECLAFGESFFLINGRFISDALKEDGVKVVYSRDNGKKLTVNGQDLTSFSQHIGSIPCITFSPAEMSVINGSPVERRRFLDNAICQADCRYLQSMLNYRRVLLQRNALLLQLKERVQSIEMLNVLTEQLSEYAADIVFARLRFLDEILPGLKAILSSVSVKEEPRITYRSSLVPSVYALTKEELINYFREQYAKKKQDEIARGLTAGGPHRDDIVFFLNQHEIKKYASQGQQRSFLIAMKMALYGYFSDKLNEKPVCLFDDLFSELDRSRVEVLFALLASFGQVFITATEKMHGPAVTTINIPEAI.

30 to 37 lines the ATP pocket; the sequence is GPNGSGKT.

The protein belongs to the RecF family.

Its subcellular location is the cytoplasm. The RecF protein is involved in DNA metabolism; it is required for DNA replication and normal SOS inducibility. RecF binds preferentially to single-stranded, linear DNA. It also seems to bind ATP. The protein is DNA replication and repair protein RecF of Chlorobium limicola (strain DSM 245 / NBRC 103803 / 6330).